The chain runs to 2098 residues: Non-reducing polyketide synthase crz7 (2098 aa).

A Starter acyltransferase (SAT) domain is found at 8–243 (ILFGDQTVDP…IKLPITAAFH (236 aa)). The Ketosynthase family 3 (KS3) domain maps to 364–789 (SSDIAIIGFA…GGNTSLLLED (426 aa)). Catalysis depends on for beta-ketoacyl synthase activity residues C532, H667, and H706. Residues 887 to 1211 (IFLFTGQGSQ…IANAYNSGVK (325 aa)) form the Malonyl-CoA:ACP transacylase (MAT) domain. The tract at residues 1270-1404 (TCLQGVENET…CTVMYGDGQQ (135 aa)) is N-terminal hotdog fold. Positions 1270 to 1578 (TCLQGVENET…FQQMKRTTLQ (309 aa)) constitute a PKS/mFAS DH domain. The active-site Proton acceptor; for dehydratase activity is the H1305. The tract at residues 1431 to 1578 (IHRMLKEMIY…FQQMKRTTLQ (148 aa)) is C-terminal hotdog fold. D1491 (proton donor; for dehydratase activity) is an active-site residue. The region spanning 1613–1690 (QSPSAGFSKV…ELRAFFLDKM (78 aa)) is the Carrier 1 domain. An O-(pantetheine 4'-phosphoryl)serine modification is found at S1650. A disordered region spans residues 1693–1725 (PQATANDDDSDDSSEDEDPGYSRSQSNSTISTP). The span at 1698–1711 (NDDDSDDSSEDEDP) shows a compositional bias: acidic residues. Polar residues predominate over residues 1714 to 1724 (SRSQSNSTIST). One can recognise a Carrier 2 domain in the interval 1725–1802 (PEEPDVVSIL…DVQKALGPTS (78 aa)). S1762 is modified (O-(pantetheine 4'-phosphoryl)serine). Residues 1844 to 2080 (LFLLPDGAGS…VSGNHFSIMF (237 aa)) are thioesterase (TE) domain.

The cofactor is pantetheine 4'-phosphate.

It functions in the pathway secondary metabolite biosynthesis. In terms of biological role, non-reducing polyketide synthase; part of the gene cluster that mediates the biosynthesis of the red pigment cristazarin, a naphthazarin derivative. The polyketide product of crz7 is likely 2-acetyl-1,3,6,8-tetrahydoxynaphthalene (AT4HN) from which a probable biosynthetic route of cristazarin can be deduced. The presence of two O-methyltransferases (crz1 and crz2), an enoyl reductase (crz5), an oxidase (crz8), and a short-chain dehydrogenase (crz9) encoded in the cristazarin biosynthetic cluster is consistent with methylation of a hydroxyl group, addition of two hydroxyl groups to the naphthalene core ring, and reduction of the acetyl side chain. The chain is Non-reducing polyketide synthase crz7 from Cladonia metacorallifera (Lichen-forming fungus).